Here is a 473-residue protein sequence, read N- to C-terminus: Keratin, type I cuticular Ha6 (473 aa).

The head stretch occupies residues 1–93 (MATQICTPTF…FCEGAFNGNE (93 aa)). An IF rod domain is found at 93 to 404 (EKATMQILND…RLLDGEDCKL (312 aa)). Positions 94-128 (KATMQILNDRLANYLEKVRQLEQENTQLECRIREW) are coil 1A. Positions 129-139 (YECQIPYICPD) are linker 1. The tract at residues 140-240 (YQSYFKTAEE…HEEEVNALRS (101 aa)) is coil 1B. The segment at 241–256 (QLGDRLNVEVDAAPPV) is linker 12. Residues 257–400 (DLNKILDDMR…ATYRRLLDGE (144 aa)) are coil 2. A tail region spans residues 401-473 (DCKLPAHPCS…SREHVVPRAM (73 aa)).

It belongs to the intermediate filament family. As to quaternary structure, heterotetramer of two type I and two type II keratins. In skin, only expressed in the suprabasal cells of tail scale epidermis. Suprabasally expressed in stratified squamous epithelia and also in the posterior unit of the complex filiform papillae of tongue. Expressed in rare anatomical sites in which an orthokeratinized stratum corneum would be too soft and a hard keratinized structure would be too rigid to meet the functional requirement of the respective epithelia.

This chain is Keratin, type I cuticular Ha6, found in Mus musculus (Mouse).